The sequence spans 193 residues: Thymidine kinase (193 aa).

Residues glycine 14 to threonine 21 and aspartate 87 to histidine 90 contribute to the ATP site. Catalysis depends on glutamate 88, which acts as the Proton acceptor. 4 residues coordinate Zn(2+): cysteine 147, cysteine 150, cysteine 185, and cysteine 188.

It belongs to the thymidine kinase family. As to quaternary structure, homotetramer.

The protein resides in the cytoplasm. It carries out the reaction thymidine + ATP = dTMP + ADP + H(+). The sequence is that of Thymidine kinase from Roseiflexus sp. (strain RS-1).